The sequence spans 711 residues: MKSLILAEKPSVGRDIANALNLQQKSNGYIEGKQYIVTWALGHLVTNATPEQYNPSYKEWNLEDLPIIPKKMKTVVISKTNRQFKIVKSLILDKNVKEIIIATDAGREGELVARLILDKVGNKKPIKRLWISSVTKKAIQEGFKQLKNGNAYQNLYEAALARSEADWIVGINATRALTTKYDAQLSLGRVQTPTIQIVKSRQDEINYFKPEKYYTLSINVDGYDLNLKQQKRYKDKKELELIEHKIKHQEGKILEVKGKNKKSYAQPLFNLTDLQQEAYKRYKMGPKETLNTLQHLYERHKLVTYPRTDSNYLTDDMVDTIQERLRAILATDYKSHVRDLISESFSSKMHIFNNQKVSDHHAIIPTEVRPSIEQLSQREFKIYMLIAERFLENLMNPYLYEVLTIHAQLKDYNFVLKEIIPKQLGYKALKDQTSSHTLTHSFKEGQLFKVHRIEIHEHETKAPEYFNEGSLLKAMENPQNHIDLNDKKYAKTLKHSGGIGTVATRADIIEKLFNMNALESRDGKIKVTSKGKQILELSPSELTSPILTAQWEEKLMLIEKGKYNSQKFIQEMKNFTFKVVNKIKSSEQKYKHDNLTTTECPTCGKFMIKVKTKNGQMLVCQDPKCKTKKNIQRKTNARCPNCKKKMTLFGKGKEAVYRCVCGHTETQSQMDKRMRDKTNGKVSRKEMKKYINKKEEIDNNPFKDALKNLKL.

Positions lysine 2–threonine 135 constitute a Toprim domain. Residues glutamate 8 and aspartate 104 each contribute to the Mg(2+) site. One can recognise a Topo IA-type catalytic domain in the interval tyrosine 152 to valine 580. Positions serine 186–glutamine 191 are interaction with DNA. Tyrosine 305 acts as the O-(5'-phospho-DNA)-tyrosine intermediate in catalysis.

It belongs to the type IA topoisomerase family. Mg(2+) is required as a cofactor.

It carries out the reaction ATP-independent breakage of single-stranded DNA, followed by passage and rejoining.. Functionally, releases the supercoiling and torsional tension of DNA, which is introduced during the DNA replication and transcription, by transiently cleaving and rejoining one strand of the DNA duplex. Introduces a single-strand break via transesterification at a target site in duplex DNA. The scissile phosphodiester is attacked by the catalytic tyrosine of the enzyme, resulting in the formation of a DNA-(5'-phosphotyrosyl)-enzyme intermediate and the expulsion of a 3'-OH DNA strand. The free DNA strand then undergoes passage around the unbroken strand, thus removing DNA supercoils. Finally, in the religation step, the DNA 3'-OH attacks the covalent intermediate to expel the active-site tyrosine and restore the DNA phosphodiester backbone. This is DNA topoisomerase 3 from Staphylococcus epidermidis (strain ATCC 12228 / FDA PCI 1200).